Consider the following 912-residue polypeptide: Protein transport protein SEC24-2 (912 aa).

Over residues 1-11 (MSNPSRPKKRV) the composition is skewed to basic residues. Disordered stretches follow at residues 1 to 83 (MSNP…QQIS) and 102 to 129 (PNAYYQPNNGNNIQPTGENKPSLTPGRP). Composition is skewed to polar residues over residues 33 to 45 (SGQTMQSQVSGSA), 53 to 74 (GQFTQPMNASDAQNQPQFMTPA), and 106 to 129 (YQPNNGNNIQPTGENKPSLTPGRP). Positions 226, 229, 248, and 251 each coordinate Zn(2+). The segment at 226–251 (CRRCRGYLNPFVKILQVESKWRCNFC) is zinc finger-like.

It belongs to the SEC23/SEC24 family. SEC24 subfamily. As to quaternary structure, the COPII coat is composed of at least 5 proteins: the SEC23/24 complex, the SEC13/31 complex, and the protein SAR1. Golgi apparatus membrane; Peripheral membrane protein; Cytoplasmic side.

It is found in the cytoplasm. The protein localises to the cytoplasmic vesicle. Its subcellular location is the COPII-coated vesicle membrane. The protein resides in the endoplasmic reticulum membrane. It localises to the golgi apparatus membrane. Functionally, component of the coat protein complex II (COPII) which promotes the formation of transport vesicles from the endoplasmic reticulum (ER). The coat has two main functions, the physical deformation of the endoplasmic reticulum membrane into vesicles and the selection of cargo molecules. The polypeptide is Protein transport protein SEC24-2 (SEC242) (Naumovozyma castellii (Yeast)).